A 229-amino-acid chain; its full sequence is Putative germin-like protein subfamily 1 member 2 (229 aa).

An N-terminal signal peptide occupies residues 1-24; it reads MKGLVQFLVAKIILLVLASTFVHC. Cysteines 34 and 50 form a disulfide. 2 N-linked (GlcNAc...) asparagine glycosylation sites follow: Asn-38 and Asn-71. The region spanning 64–215 is the Cupin type-1 domain; the sequence is SGLNIPGNTS…AFALDVNIVR (152 aa). Positions 112 and 114 each coordinate Mn(2+). Asn-139 carries N-linked (GlcNAc...) asparagine glycosylation. Position 163 (His-163) interacts with Mn(2+).

Belongs to the germin family. Oligomer (believed to be a pentamer but probably hexamer).

The protein localises to the secreted. It is found in the extracellular space. The protein resides in the apoplast. May play a role in plant defense. Probably has no oxalate oxidase activity even if the active site is conserved. The polypeptide is Putative germin-like protein subfamily 1 member 2 (Arabidopsis thaliana (Mouse-ear cress)).